A 133-amino-acid chain; its full sequence is Ribonuclease P protein component (133 aa).

It belongs to the RnpA family. As to quaternary structure, consists of a catalytic RNA component (M1 or rnpB) and a protein subunit.

It catalyses the reaction Endonucleolytic cleavage of RNA, removing 5'-extranucleotides from tRNA precursor.. RNaseP catalyzes the removal of the 5'-leader sequence from pre-tRNA to produce the mature 5'-terminus. It can also cleave other RNA substrates such as 4.5S RNA. The protein component plays an auxiliary but essential role in vivo by binding to the 5'-leader sequence and broadening the substrate specificity of the ribozyme. This chain is Ribonuclease P protein component, found in Bartonella quintana (strain Toulouse) (Rochalimaea quintana).